A 244-amino-acid chain; its full sequence is NAD(P)H-quinone oxidoreductase subunit K (244 aa).

[4Fe-4S] cluster is bound by residues cysteine 60, cysteine 61, cysteine 125, and cysteine 156. Residues 221–236 are compositionally biased toward basic and acidic residues; it reads SKKEKITELPENREQT. A disordered region spans residues 221–244; it reads SKKEKITELPENREQTEIINSEEE.

Belongs to the complex I 20 kDa subunit family. In terms of assembly, NDH-1 can be composed of about 15 different subunits; different subcomplexes with different compositions have been identified which probably have different functions. [4Fe-4S] cluster is required as a cofactor.

Its subcellular location is the cellular thylakoid membrane. It carries out the reaction a plastoquinone + NADH + (n+1) H(+)(in) = a plastoquinol + NAD(+) + n H(+)(out). It catalyses the reaction a plastoquinone + NADPH + (n+1) H(+)(in) = a plastoquinol + NADP(+) + n H(+)(out). Its function is as follows. NDH-1 shuttles electrons from an unknown electron donor, via FMN and iron-sulfur (Fe-S) centers, to quinones in the respiratory and/or the photosynthetic chain. The immediate electron acceptor for the enzyme in this species is believed to be plastoquinone. Couples the redox reaction to proton translocation, and thus conserves the redox energy in a proton gradient. Cyanobacterial NDH-1 also plays a role in inorganic carbon-concentration. The chain is NAD(P)H-quinone oxidoreductase subunit K from Prochlorococcus marinus (strain MIT 9312).